A 402-amino-acid chain; its full sequence is 4-hydroxy-3-methylbut-2-en-1-yl diphosphate synthase (ferredoxin) (402 aa).

Residues cysteine 311, cysteine 314, cysteine 345, and glutamate 352 each contribute to the [4Fe-4S] cluster site.

This sequence belongs to the IspG family. It depends on [4Fe-4S] cluster as a cofactor.

The catalysed reaction is (2E)-4-hydroxy-3-methylbut-2-enyl diphosphate + 2 oxidized [2Fe-2S]-[ferredoxin] + H2O = 2-C-methyl-D-erythritol 2,4-cyclic diphosphate + 2 reduced [2Fe-2S]-[ferredoxin] + H(+). The protein operates within isoprenoid biosynthesis; isopentenyl diphosphate biosynthesis via DXP pathway; isopentenyl diphosphate from 1-deoxy-D-xylulose 5-phosphate: step 5/6. In terms of biological role, converts 2C-methyl-D-erythritol 2,4-cyclodiphosphate (ME-2,4cPP) into 1-hydroxy-2-methyl-2-(E)-butenyl 4-diphosphate, using ferredoxin I (PetF) as the reducing agent. This is 4-hydroxy-3-methylbut-2-en-1-yl diphosphate synthase (ferredoxin) from Thermosynechococcus vestitus (strain NIES-2133 / IAM M-273 / BP-1).